The sequence spans 519 residues: Galactokinase (519 aa).

Alpha-D-galactose-binding residues include arginine 47, glutamate 53, histidine 54, and aspartate 56. Residues glycine 159, glycine 161, serine 163, and serine 164 each coordinate ATP. Residue aspartate 209 participates in alpha-D-galactose binding. The Proton acceptor role is filled by aspartate 209. Asparagine 257 and lysine 258 together coordinate ATP. Position 266 (tyrosine 266) interacts with alpha-D-galactose.

This sequence belongs to the GHMP kinase family. GalK subfamily.

The enzyme catalyses alpha-D-galactose + ATP = alpha-D-galactose 1-phosphate + ADP + H(+). It functions in the pathway carbohydrate metabolism; galactose metabolism. Its function is as follows. Galactokinase is a key enzyme in the galactose metabolism where it catalyzes the conversion of alpha-D-galactose to galactose 1-phosphate. Can also induce the transcription of the gal genes in response to the organism being challenged with galactose as the sole source of carbon. This chain is Galactokinase (gal1), found in Schizosaccharomyces pombe (strain 972 / ATCC 24843) (Fission yeast).